We begin with the raw amino-acid sequence, 210 residues long: Ribosomal RNA small subunit methyltransferase G (210 aa).

S-adenosyl-L-methionine contacts are provided by residues glycine 76, leucine 81, 127–128, and arginine 142; that span reads VE.

This sequence belongs to the methyltransferase superfamily. RNA methyltransferase RsmG family.

It localises to the cytoplasm. It carries out the reaction guanosine(527) in 16S rRNA + S-adenosyl-L-methionine = N(7)-methylguanosine(527) in 16S rRNA + S-adenosyl-L-homocysteine. Functionally, specifically methylates the N7 position of guanine in position 527 of 16S rRNA. In Aliivibrio fischeri (strain ATCC 700601 / ES114) (Vibrio fischeri), this protein is Ribosomal RNA small subunit methyltransferase G.